Reading from the N-terminus, the 183-residue chain is uncharacterized protein (183 aa).

The Macro domain occupies 1-182; it reads MFRVVHGDIT…VALKVLERDE (182 aa).

This is an uncharacterized protein from Pyrococcus abyssi (strain GE5 / Orsay).